The primary structure comprises 443 residues: D(2) dopamine receptor (443 aa).

Topologically, residues 1–37 are extracellular; it reads MDPLNLSWYDDDLERQNWSRPFNGSDGKADRPHYNYY. Residues N5, N17, and N23 are each glycosylated (N-linked (GlcNAc...) asparagine). A helical transmembrane segment spans residues 38–60; that stretch reads ATLLTLLIAVIVFGNVLVCMAVS. The Cytoplasmic portion of the chain corresponds to 61–70; that stretch reads REKALQTTTN. Residues 71 to 93 form a helical membrane-spanning segment; the sequence is YLIVSLAVADLLVATLVMPWVVY. Residues 94–108 are Extracellular-facing; sequence LEVVGEWKFSKIHCD. C107 and C182 are oxidised to a cystine. Residues 109–130 form a helical membrane-spanning segment; that stretch reads IFVTLDVMMCTASILNLCAISI. Over 131-151 the chain is Cytoplasmic; it reads DRYTAVAMPMLYNTRYSSKRR. Residues 152 to 172 form a helical membrane-spanning segment; the sequence is VTVMIAIVWVLSFTISCPLLF. The Extracellular portion of the chain corresponds to 173-188; the sequence is GLNNADQNECIIANPA. The chain crosses the membrane as a helical span at residues 189–213; that stretch reads FVVYSSIVSFYVPFIVTLLVYIKIY. The interval 211 to 373 is interaction with PPP1R9B; it reads KIYIVLRRRR…SQQKEKKATQ (163 aa). Topologically, residues 214 to 373 are cytoplasmic; the sequence is IVLRRRRKRV…SQQKEKKATQ (160 aa). The tract at residues 281–332 is disordered; that stretch reads MEMLSSTSPPERTRYSPIPPSHHQLTLPDPSHHGLHSTPDSPAKPEKNGHAK. Residues 374-395 traverse the membrane as a helical segment; it reads MLAIVLGVFIICWLPFFITHIL. The Extracellular segment spans residues 396 to 409; it reads NIHCDCNIPPVLYS. A disulfide bridge connects residues C399 and C401. The chain crosses the membrane as a helical span at residues 410–431; that stretch reads AFTWLGYVNSAVNPIIYTTFNI. Over 432 to 443 the chain is Cytoplasmic; that stretch reads EFRKAFLKILHC. Residue C443 is the site of S-palmitoyl cysteine attachment.

The protein belongs to the G-protein coupled receptor 1 family. In terms of assembly, forms homo- and heterooligomers with DRD4. The interaction with DRD4 may modulate agonist-induced downstream signaling. Interacts with CADPS and CADPS2. Interacts with GPRASP1, PPP1R9B and CLIC6. Interacts with ARRB2. Interacts with HTR2A. Interacts with DRD1. Interacts with KCNA2. In terms of processing, palmitoylated. Palmitoylation which is required for proper localization to the plasma membrane and stability of the receptor could be carried on by ZDHHC4, ZDHHC3 and ZDHHC8.

The protein localises to the cell membrane. The protein resides in the golgi apparatus membrane. Functionally, dopamine receptor whose activity is mediated by G proteins which inhibit adenylyl cyclase. Positively regulates postnatal regression of retinal hyaloid vessels via suppression of VEGFR2/KDR activity, downstream of OPN5. The sequence is that of D(2) dopamine receptor (DRD2) from Chlorocebus aethiops (Green monkey).